Here is a 494-residue protein sequence, read N- to C-terminus: MKAMMVVGTTSHAGKSFITTAICRILARRGWHITPFKGQNMALNAYVTTTGGEIGYAQAVQAWAAGINPRVEMNPILLKPQGNMTSQVILGGKAAGITTATNYYEQYFDKGWNMIVHSLERLAVEYDFVVCEGAGSPAEINLKHRDLTNMRVAKYLNAPTLLVVDIDRGGAFAHVVGTLQLLDESERALIKGIVINKFRGQRSLLDSGIEWLENYTGIPVLGVIPWREISFSAEDSLDLLERRRKEQKEINVTILRLPHIANFTDFEPLDAEKTVSISYLDLNEPLGYPDAVIIPGSKTTINDLIALHESGIAKQLQDYVAAGGIVLGICGGFQMLGEMVFDPDQLEGNNVSYAGLNLLPIETVITPEKIVRQRHTCSVYPYPGFPITGYEIHQGVTRSSKSPHQRIKTTNHPLFEDGSLGIVNDNQSVWGCYLHGIFDNGAWRRNWLNYLRNRRGLPSLPTGIANYREQRETVLNQLADLVEQYIDLTPLLNN.

A GATase cobBQ-type domain is found at 249 to 443 (EINVTILRLP…LHGIFDNGAW (195 aa)). Cysteine 330 functions as the Nucleophile in the catalytic mechanism. The active site involves histidine 435.

This sequence belongs to the CobB/CobQ family. CobQ subfamily.

The protein operates within cofactor biosynthesis; adenosylcobalamin biosynthesis. Its function is as follows. Catalyzes amidations at positions B, D, E, and G on adenosylcobyrinic A,C-diamide. NH(2) groups are provided by glutamine, and one molecule of ATP is hydrogenolyzed for each amidation. The chain is Cobyric acid synthase from Crocosphaera subtropica (strain ATCC 51142 / BH68) (Cyanothece sp. (strain ATCC 51142)).